Here is a 291-residue protein sequence, read N- to C-terminus: Formamidopyrimidine-DNA glycosylase (291 aa).

The Schiff-base intermediate with DNA role is filled by Pro2. Residue Glu3 is the Proton donor of the active site. The Proton donor; for beta-elimination activity role is filled by Lys58. Residues His104, Arg123, and Lys166 each coordinate DNA. The FPG-type zinc finger occupies 257–291 (KVYDREGKPCPTCGGTVQRFVQNGRSTFWCPKCQK). Arg281 serves as the catalytic Proton donor; for delta-elimination activity.

The protein belongs to the FPG family. Monomer. Zn(2+) is required as a cofactor.

The enzyme catalyses Hydrolysis of DNA containing ring-opened 7-methylguanine residues, releasing 2,6-diamino-4-hydroxy-5-(N-methyl)formamidopyrimidine.. It catalyses the reaction 2'-deoxyribonucleotide-(2'-deoxyribose 5'-phosphate)-2'-deoxyribonucleotide-DNA = a 3'-end 2'-deoxyribonucleotide-(2,3-dehydro-2,3-deoxyribose 5'-phosphate)-DNA + a 5'-end 5'-phospho-2'-deoxyribonucleoside-DNA + H(+). Involved in base excision repair of DNA damaged by oxidation or by mutagenic agents. Acts as a DNA glycosylase that recognizes and removes damaged bases. Has a preference for oxidized purines, such as 7,8-dihydro-8-oxoguanine (8-oxoG). Has AP (apurinic/apyrimidinic) lyase activity and introduces nicks in the DNA strand. Cleaves the DNA backbone by beta-delta elimination to generate a single-strand break at the site of the removed base with both 3'- and 5'-phosphates. In Rhodopseudomonas palustris (strain TIE-1), this protein is Formamidopyrimidine-DNA glycosylase.